The primary structure comprises 593 residues: Efflux pump FUBT (593 aa).

The segment at 1–44 is disordered; that stretch reads MAIDPQPSSPSLSSETIANDTIGNDNNVNEPSVEPKTQENQHTV. Over residues 9-30 the composition is skewed to polar residues; that stretch reads SPSLSSETIANDTIGNDNNVNE. N-linked (GlcNAc...) asparagine glycosylation is present at N19. A run of 12 helical transmembrane segments spans residues 98–118, 135–155, 167–187, 195–215, 227–247, 254–274, 337–357, 367–387, 410–430, 438–458, 468–488, and 503–523; these read WAFVLLQSLACLATTFASSAY, VATLGISLYVLGFTFGPLIWA, FFFTFMVATAFSAGAAGAGSI, FLTGSIGSAPLSNAPALIADM, MFSGAPFLGPAIGPIAGGFLG, WLHGLMAAFTGVTWIACTVFI, IYISIIYGTMYMCFAAFPIVF, IGGLAFTGIVIGVVLSIISFA, LPPAIMGSLLIPIGLFWFAWT, IVPIIGTVFFAWGLVLVFMAL, IFAASIMAANSALRSLFGAAF, and WASSIPAFLALACVPFPFLFY. Positions 570–593 are disordered; it reads THNSHASAAHSHGHRRSLSYTRSV.

It belongs to the major facilitator superfamily. DHA1 family. Polyamines/proton antiporter (TC 2.A.1.2.16) subfamily.

Its subcellular location is the cell membrane. Functionally, efflux pump involved in export of fusaric acid, a mycotoxin with low to moderate toxicity to animals and humans, but with high phytotoxic properties. Constitutes a self-protecting mechanism of the fungus against critical levels of FSA within the cell. The protein is Efflux pump FUBT of Fusarium oxysporum (Fusarium vascular wilt).